We begin with the raw amino-acid sequence, 1775 residues long: Atrochrysone carboxylic acid synthase (1775 aa).

The tract at residues 29–258 is N-terminal acylcarrier protein transacylase domain (SAT); sequence RSQSKTESGW…QLPVYGGLCH (230 aa). The 431-residue stretch at 391 to 821 folds into the Ketosynthase family 3 (KS3) domain; it reads DSSIAIVGMA…GGNTSLLIEE (431 aa). Active-site for beta-ketoacyl synthase activity residues include Cys564, His699, and His740. The tract at residues 921-1241 is malonyl-CoA:ACP transacylase (MAT) domain; that stretch reads FVFSGQGSFY…MAQLHNLGVD (321 aa). The interval 1305–1626 is product template (PT) domain; it reads TSLVHRLVCE…RSLINTFFSP (322 aa). Residues 1309–1455 are N-terminal hotdog fold; the sequence is HRLVCESVQE…WLEEWSPMTH (147 aa). The PKS/mFAS DH domain occupies 1309–1621; that stretch reads HRLVCESVQE…FRTFPRSLIN (313 aa). Residue His1341 is the Proton acceptor; for dehydratase activity of the active site. Positions 1472-1621 are C-terminal hotdog fold; the sequence is TANRLSRDMV…FRTFPRSLIN (150 aa). Catalysis depends on Asp1532, which acts as the Proton donor; for dehydratase activity. The disordered stretch occupies residues 1672–1694; sequence SRTVMDSSDSSPATTLTPPTLPS. Residues 1677-1689 are compositionally biased toward low complexity; that stretch reads DSSDSSPATTLTP. The region spanning 1698 to 1775 is the Carrier domain; sequence STESPIVHRA…DLKAWLIDYC (78 aa). The residue at position 1735 (Ser1735) is an O-(pantetheine 4'-phosphoryl)serine.

As to expression, endocrocin is specifically produced in conidia.

It catalyses the reaction holo-[ACP] + 8 malonyl-CoA + 8 H(+) = atrochrysone carboxyl-[ACP] + 8 CO2 + 8 CoA + 2 H2O. It functions in the pathway secondary metabolite biosynthesis. Functionally, non-reducing polyketide synthase; part of the gene cluster that mediates the biosynthesis of endocrocin, a simple anthraquinone interesting for many biotechnological applications. The pathway begins with the synthesis of atrochrysone thioester by the polyketide synthase (PKS) encA. The atrochrysone carboxyl ACP thioesterase encB then breaks the thioester bond and releases the atrochrysone carboxylic acid from encA. The atrochrysone carboxylic acid is then converted to endocrocin anthrone which is further oxidized into endocrocin by the anthrone oxygenase encC. The exact function of encD has not been identified yet, but it negatively regulates endocrocin production, likely through the modification of endocrocin itself. This Aspergillus fumigatus (strain ATCC MYA-4609 / CBS 101355 / FGSC A1100 / Af293) (Neosartorya fumigata) protein is Atrochrysone carboxylic acid synthase.